The sequence spans 222 residues: Cytidylate kinase (222 aa).

11–19 (GPSGSGKST) is an ATP binding site.

The protein belongs to the cytidylate kinase family. Type 1 subfamily.

It is found in the cytoplasm. The catalysed reaction is CMP + ATP = CDP + ADP. It carries out the reaction dCMP + ATP = dCDP + ADP. This is Cytidylate kinase from Ureaplasma urealyticum serovar 10 (strain ATCC 33699 / Western).